The following is a 441-amino-acid chain: Ribulose bisphosphate carboxylase large chain (441 aa).

Lys5 carries the N6,N6,N6-trimethyllysine modification. Positions 114 and 164 each coordinate substrate. The active-site Proton acceptor is the Lys166. Substrate is bound at residue Lys168. Lys192, Asp194, and Glu195 together coordinate Mg(2+). Lys192 is subject to N6-carboxylysine. His285 (proton acceptor) is an active-site residue. Substrate-binding residues include Arg286, His318, and Ser370.

The protein belongs to the RuBisCO large chain family. Type I subfamily. Heterohexadecamer of 8 large chains and 8 small chains; disulfide-linked. The disulfide link is formed within the large subunit homodimers. Mg(2+) is required as a cofactor. The disulfide bond which can form in the large chain dimeric partners within the hexadecamer appears to be associated with oxidative stress and protein turnover.

The protein resides in the plastid. It is found in the chloroplast. It catalyses the reaction 2 (2R)-3-phosphoglycerate + 2 H(+) = D-ribulose 1,5-bisphosphate + CO2 + H2O. The catalysed reaction is D-ribulose 1,5-bisphosphate + O2 = 2-phosphoglycolate + (2R)-3-phosphoglycerate + 2 H(+). Its function is as follows. RuBisCO catalyzes two reactions: the carboxylation of D-ribulose 1,5-bisphosphate, the primary event in carbon dioxide fixation, as well as the oxidative fragmentation of the pentose substrate in the photorespiration process. Both reactions occur simultaneously and in competition at the same active site. The sequence is that of Ribulose bisphosphate carboxylase large chain from Glycyrrhiza echinata (Licorice).